Here is a 590-residue protein sequence, read N- to C-terminus: Aspartate--tRNA(Asp/Asn) ligase (590 aa).

Position 175 (glutamate 175) interacts with L-aspartate. Residues 199–202 (QQFK) are aspartate. L-aspartate-binding residues include arginine 221 and histidine 452. ATP is bound at residue 221–223 (RDE). An ATP-binding site is contributed by glutamate 485. Position 492 (arginine 492) interacts with L-aspartate. 537-540 (GIDR) is a binding site for ATP.

The protein belongs to the class-II aminoacyl-tRNA synthetase family. Type 1 subfamily. In terms of assembly, homodimer.

Its subcellular location is the cytoplasm. It catalyses the reaction tRNA(Asx) + L-aspartate + ATP = L-aspartyl-tRNA(Asx) + AMP + diphosphate. Its function is as follows. Aspartyl-tRNA synthetase with relaxed tRNA specificity since it is able to aspartylate not only its cognate tRNA(Asp) but also tRNA(Asn). Reaction proceeds in two steps: L-aspartate is first activated by ATP to form Asp-AMP and then transferred to the acceptor end of tRNA(Asp/Asn). This is Aspartate--tRNA(Asp/Asn) ligase from Dinoroseobacter shibae (strain DSM 16493 / NCIMB 14021 / DFL 12).